The chain runs to 655 residues: Epithelial sodium channel subunit alpha (655 aa).

Over 1-55 the chain is Cytoplasmic; that stretch reads MTDKEEEAEGGKKKEPMIGFYDSYQELFEFFCNNTTIHGTIRMVCSKHNNMKTVS. The chain crosses the membrane as a helical span at residues 56–76; it reads WTILFITTFGVMYWQFGLLLG. Over 77–531 the chain is Extracellular; the sequence is QYYSYPVSIT…SQWSLWFGSS (455 aa). Intrachain disulfides connect Cys102-Cys275, Cys199-Cys206, Cys252-Cys259, Cys364-Cys448, Cys385-Cys425, Cys385-Cys444, Cys389-Cys440, Cys398-Cys425, Cys398-Cys448, and Cys400-Cys414. The chain crosses the membrane as a helical span at residues 532 to 552; that stretch reads VLSVVEMGELVFDLIAVGVIV. At 553 to 655 the chain is on the cytoplasmic side; that stretch reads LRRRRREKCQ…QEASEGPTVL (103 aa). The interval 561–587 is disordered; it reads CQASSDGEGTSDSTAGTHRGQENASRS. Positions 562-586 are enriched in polar residues; the sequence is QASSDGEGTSDSTAGTHRGQENASR.

This sequence belongs to the amiloride-sensitive sodium channel (TC 1.A.6) family. SCNN1A subfamily. Heterotrimer; containing an alpha/SCNN1A, a beta/SCNN1B and a gamma/SCNN1G subunit. Strongly expressed in gill, kidney and rectum (at protein level). More weakly expressed in muscle, brain, heart, liver and intestine.

The protein resides in the apical cell membrane. The protein localises to the cell projection. It is found in the cilium. It localises to the cytoplasmic granule. Its subcellular location is the cytoplasm. The protein resides in the cytoplasmic vesicle. The protein localises to the secretory vesicle. It is found in the acrosome. It localises to the flagellum. The enzyme catalyses Na(+)(in) = Na(+)(out). Its activity is regulated as follows. Originally identified and characterized by its inhibition by the diuretic drug amiloride. Functionally, this is one of the three pore-forming subunits of the heterotrimeric epithelial sodium channel (ENaC), a critical regulator of sodium balance and fluid homeostasis. ENaC operates in epithelial tissues, where it mediates the electrodiffusion of sodium ions from extracellular fluid through the apical membrane of cells, with water following osmotically. This Neoceratodus forsteri (Australian lungfish) protein is Epithelial sodium channel subunit alpha (scnn1a).